The chain runs to 1402 residues: MESVEEKSKQRRWLPNFKALRLKVYRLADRLNIPLADAARVELEEYDGSDPQSLRGLQKLPRTLYFGLPLPDSELDDTGEAKRWFPRNKIRTAKYTPIDFIPKNIFLQFQNVANLFFLFLVILQSISIFGEQVNPGLAAVPLIVVVGITAVKDAIEDFRRTMLDIHLNNTPTLRLSHYQNPNIRTEYISYFRRFKKRISALFRVFLAKQEEKKRAKRLNDAVPLEDMAGSESRPSYDSIFRESFEAKRSFEDSKGKVPLSALDGTATILQSRPMDIIDYEAEATGECHFKKTYWKDVRVGDFVKVMDNDEIPADIVIINSSDPEGICYIETKNLDGETNLKMRHALTCGKNVVDEASCERCRFWIESEPPHANLYEYNGACKSFVHSEAGGSDTSQTVSEPISLDSMLLRGCVLRNTKWVIGVVVFTGDDTKIMLNSGAPPLKRSRITRNLNWNVYLNFIILFSMCFVCAVVEGIAWRGHSRSSYYFEFGSIGGSPAKDGVVTFFTGVILFQNLVPISLYISIEIVKTIQAIFIYFDKDMYYKKLKYACTPKSWNISDDLGQVEYIFSDKTGTLTQNVMEFKKCTINGVAYGEAFTEAMAGMAKREGKDTEELTLQKQSFIERDRMQMISQMRNMHDNKYLVDDNLTFISSQFVHDLAGKAGEEQSLACYEFFLALALCHSVVADRVGDRIVYKAQSPDEAALVGTARDVGFVFLDQRRDIMVTRALGETQRFKLMDTIEFSSARKRMSVIVKGPDNRYVLICKGADSIIFERLEPNEQVELRKTTSEHLRIFALEGLRTLCIAKRELTEEEYYEWKEKYDIAASAIENREEQIEEVADLIESHLTLLGGTAIEDRLQEGVPDSIALLAQAGIKLWVLTGDKMETAINIGFSCNLLDAGMDMIKFDVDQEVSTPELEVILADYLYRYFGLSGSVEELEAAKKDHDTPSGSHALVIDGSVLKRVLDGPMRTKFLLLCKRCKAVLCCRVSPAQKADVVQLVRESLEVMTLAIGDGANDVAMIQKADIGVGIVGEEGRAAAMSADYAIGQFRFLSKLVLVHGRWDYNRVAEMVNNFFYKSVVWTFTLFWYQIYNNFDANYLFDYTYVMLFNLIFSSLPVIVMGVYDQDVNADLSLRIPQLYKRGILQLNSARKIFIGYMLDGFYQSVICFFFSFLVINNVTTAAQNGRDTMAVQDLGVYVAAPTIMVVDTYVILNQSNWDVFSIGLWALSCLTFWFWTGVYSQSLYTYEFYKSASRIFRTPNFWAVLCGTIVSCLFPKFLFMTTQKLFWPYDVDIIRESYRTKRLHELDEEEEIENAEQSPDWASSTLQVPFNASSSSLATPKKEPLRLDTNSLTLTSSMPRSFTPSYTPSFLEGSPVFSDEILNRGEYMPHRGSISSSEQPLRP.

Transmembrane regions (helical) follow at residues 109–129, 135–155, 457–477, and 501–521; these read FQNVANLFFLFLVILQSISIF, PGLAAVPLIVVVGITAVKDAI, LNFIILFSMCFVCAVVEGIAW, and VVTFFTGVILFQNLVPISLYI. Residue D569 is the 4-aspartylphosphate intermediate of the active site. Residues D569, K570, T571, E700, F741, S743, K746, K764, R799, T800, T879, G880, D881, R986, and K992 each coordinate ATP. Residue D569 participates in Mg(2+) binding. Mg(2+) is bound at residue T571. D1012 contributes to the Mg(2+) binding site. Residues N1015 and D1016 each coordinate ATP. D1016 is a Mg(2+) binding site. 6 helical membrane passes run 1066-1086, 1101-1121, 1151-1171, 1193-1213, 1218-1238, and 1260-1280; these read VAEMVNNFFYKSVVWTFTLFW, YTYVMLFNLIFSSLPVIVMGV, IFIGYMLDGFYQSVICFFFSF, LGVYVAAPTIMVVDTYVILNQ, VFSIGLWALSCLTFWFWTGVY, and FWAVLCGTIVSCLFPKFLFMT. Position 1275 (K1275) interacts with a 1,2-diacyl-sn-glycero-3-phospho-L-serine.

Belongs to the cation transport ATPase (P-type) (TC 3.A.3) family. Type IV subfamily. It depends on Mg(2+) as a cofactor.

The protein localises to the cell membrane. It is found in the endoplasmic reticulum membrane. The enzyme catalyses ATP + H2O + phospholipidSide 1 = ADP + phosphate + phospholipidSide 2.. It catalyses the reaction a 1,2-diacyl-sn-glycero-3-phosphoethanolamine(out) + ATP + H2O = a 1,2-diacyl-sn-glycero-3-phosphoethanolamine(in) + ADP + phosphate + H(+). It carries out the reaction a 1,2-diacyl-sn-glycero-3-phosphocholine(out) + ATP + H2O = a 1,2-diacyl-sn-glycero-3-phosphocholine(in) + ADP + phosphate + H(+). The catalysed reaction is a beta-D-glucosyl-(1&lt;-&gt;1')-N-acylsphing-4-enine(out) + ATP + H2O = a beta-D-glucosyl-(1&lt;-&gt;1')-N-acylsphing-4-enine(in) + ADP + phosphate + H(+). The enzyme catalyses a 1,2-diacyl-sn-glycero-3-phospho-L-serine(out) + ATP + H2O = a 1,2-diacyl-sn-glycero-3-phospho-L-serine(in) + ADP + phosphate + H(+). In terms of biological role, catalytic component of a P4-ATPase flippase complex which catalyzes the hydrolysis of ATP coupled to the transport of glucosylceramide, phosphatidylcholine, phosphatidylethanolamine, and small amounts of phosphatidylserine from the lumenal to the cytosolic leaflet of the cell membrane and ensures the maintenance of asymmetric distribution of phospholipids. This chain is Phospholipid-transporting ATPase dnf2, found in Schizosaccharomyces pombe (strain 972 / ATCC 24843) (Fission yeast).